A 342-amino-acid chain; its full sequence is tRNA-specific 2-thiouridylase MnmA 2 (342 aa).

C62 (nucleophile) is an active-site residue. C62 and C160 are joined by a disulfide. Residue G86 participates in ATP binding. An interaction with tRNA region spans residues 110 to 112 (KDQ). C160 (cysteine persulfide intermediate) is an active-site residue. Positions 268–269 (RY) are interaction with tRNA.

This sequence belongs to the MnmA/TRMU family.

It localises to the cytoplasm. It catalyses the reaction S-sulfanyl-L-cysteinyl-[protein] + uridine(34) in tRNA + AH2 + ATP = 2-thiouridine(34) in tRNA + L-cysteinyl-[protein] + A + AMP + diphosphate + H(+). Its function is as follows. Catalyzes the 2-thiolation of uridine at the wobble position (U34) of tRNA, leading to the formation of s(2)U34. The protein is tRNA-specific 2-thiouridylase MnmA 2 of Syntrophus aciditrophicus (strain SB).